The sequence spans 179 residues: Large ribosomal subunit protein uL5 (179 aa).

It belongs to the universal ribosomal protein uL5 family. In terms of assembly, part of the 50S ribosomal subunit; part of the 5S rRNA/L5/L18/L25 subcomplex. Contacts the 5S rRNA and the P site tRNA. Forms a bridge to the 30S subunit in the 70S ribosome.

In terms of biological role, this is one of the proteins that bind and probably mediate the attachment of the 5S RNA into the large ribosomal subunit, where it forms part of the central protuberance. In the 70S ribosome it contacts protein S13 of the 30S subunit (bridge B1b), connecting the 2 subunits; this bridge is implicated in subunit movement. Contacts the P site tRNA; the 5S rRNA and some of its associated proteins might help stabilize positioning of ribosome-bound tRNAs. The chain is Large ribosomal subunit protein uL5 from Rickettsia akari (strain Hartford).